The following is a 172-amino-acid chain: T-cell receptor gamma chain C region C7.5 (172 aa).

The segment at Asp-1–Thr-140 is c region. Residues Tyr-141–Leu-160 traverse the membrane as a helical segment. The Cytoplasmic portion of the chain corresponds to Arg-161 to Ser-172.

It localises to the membrane. The sequence is that of T-cell receptor gamma chain C region C7.5 from Mus musculus (Mouse).